The chain runs to 399 residues: Probable 3-ketosteroid-9-alpha-monooxygenase, oxygenase component (399 aa).

The Rieske domain maps to 26–128 (WHCLGLVRDF…VAEVSGQLFV (103 aa)). [2Fe-2S] cluster is bound by residues Cys-67, His-69, Cys-86, and His-89. Residues Asn-175, His-181, His-186, and Asp-307 each coordinate Fe cation.

In terms of assembly, homotrimer. The two-component system 3-ketosteroid-9-alpha-monooxygenase is composed of an oxygenase component KshA and a reductase component KshB. It depends on [2Fe-2S] cluster as a cofactor. Fe cation serves as cofactor.

Could catalyze the introduction of a 9alpha-hydroxyl moiety into the ring B of 3-ketosteroid substrates. The chain is Probable 3-ketosteroid-9-alpha-monooxygenase, oxygenase component from Rhodococcus rhodochrous.